The following is a 587-amino-acid chain: MPTLIALDASLSMLRPVPGRNEHTYQSLATKGIQHLLDNLTAAGKLEHVALLSYSTTAELKVDFTRDYDQVRQAVKKVEPVDKACLMSMLKAVVSIMSPWGNQNILQVVVFTDCGLGFGNTSITGFLEAYAEKESEPEFGFLKTLANYNLNFICLGLHGDYYFTRGLAVYQQLLDKVSLKGQLFMTKPAKSSDAVEGNPNPNPNPSHKSELGRTTVFELIERLCEASYKSSEVTLKCGSYFRMEASVLLWPPTAPYEQKSHIFGREPTIRHTDQKIEVCGFLSLSDIGSPATLSRHWVLPKVEREKSGSSRRSGNLSAAAKPPKLNLDTSNPNYELEKLEADIKEFYAKDSKDTEESGDDDVTIVLKPGPQTEQQKENLCVLLHGALKMENMAALVRVGDKWYGFIYAFTDSKKKSNLMLNILPPGTNVIPWLGDLESLGFPEDLAPGETASFPVRADRRSYSQSSVVWIRQASLQSDVQKVLRHAKKMPDKTQHFYKELNRIRRAALALGFVELLEALAMLLEKECAHLSLNGASNDCTLQLQHAATELRKTSNRDMKSMIVPLQKVGASDAGSTAATAPAPAYMY.

The 111-residue stretch at 3–113 (TLIALDASLS…NILQVVVFTD (111 aa)) folds into the VWFA domain. Disordered stretches follow at residues 190–211 (KSSDAVEGNPNPNPNPSHKSEL) and 304–331 (REKSGSSRRSGNLSAAAKPPKLNLDTSN).

It belongs to the Integrator subunit 14 family. In terms of assembly, belongs to the multiprotein complex Integrator, at least composed of IntS1, IntS2, IntS3, IntS4, omd/IntS5, IntS6, defl/IntS7, IntS8, IntS9, IntS10, IntS11, IntS12, asun/IntS13, IntS14 and IntS15. The core complex associates with protein phosphatase 2A subunits mts/PP2A and Pp2A-29B, to form the Integrator-PP2A (INTAC) complex.

Its subcellular location is the nucleus. Component of the integrator complex, a multiprotein complex that terminates RNA polymerase II (Pol II) transcription in the promoter-proximal region of genes. The integrator complex provides a quality checkpoint during transcription elongation by driving premature transcription termination of transcripts that are unfavorably configured for transcriptional elongation: the complex terminates transcription by (1) catalyzing dephosphorylation of the C-terminal domain (CTD) of Pol II subunit Polr2A/Rbp1 and Spt5, and (2) degrading the exiting nascent RNA transcript via endonuclease activity. The integrator complex is also involved in the 3'-end processing of the U7 snRNA, and also the spliceosomal snRNAs U1, U2, U4 and U5. The sequence is that of Integrator complex subunit 14 from Drosophila melanogaster (Fruit fly).